A 179-amino-acid chain; its full sequence is Ribosome maturation factor RimM (179 aa).

The PRC barrel domain maps to 95-174 (KDEFFYFDIL…QIFCTQDAFL (80 aa)).

Belongs to the RimM family. In terms of assembly, binds ribosomal protein uS19.

The protein resides in the cytoplasm. An accessory protein needed during the final step in the assembly of 30S ribosomal subunit, possibly for assembly of the head region. Essential for efficient processing of 16S rRNA. May be needed both before and after RbfA during the maturation of 16S rRNA. It has affinity for free ribosomal 30S subunits but not for 70S ribosomes. This chain is Ribosome maturation factor RimM, found in Campylobacter jejuni subsp. jejuni serotype O:6 (strain 81116 / NCTC 11828).